The chain runs to 404 residues: Phosphopentomutase (404 aa).

Residues aspartate 10, aspartate 303, histidine 308, aspartate 344, histidine 345, and histidine 356 each coordinate Mn(2+).

Belongs to the phosphopentomutase family. The cofactor is Mn(2+).

It localises to the cytoplasm. The enzyme catalyses 2-deoxy-alpha-D-ribose 1-phosphate = 2-deoxy-D-ribose 5-phosphate. It carries out the reaction alpha-D-ribose 1-phosphate = D-ribose 5-phosphate. It functions in the pathway carbohydrate degradation; 2-deoxy-D-ribose 1-phosphate degradation; D-glyceraldehyde 3-phosphate and acetaldehyde from 2-deoxy-alpha-D-ribose 1-phosphate: step 1/2. In terms of biological role, isomerase that catalyzes the conversion of deoxy-ribose 1-phosphate (dRib-1-P) and ribose 1-phosphate (Rib-1-P) to deoxy-ribose 5-phosphate (dRib-5-P) and ribose 5-phosphate (Rib-5-P), respectively. The chain is Phosphopentomutase from Shewanella baltica (strain OS185).